Here is a 327-residue protein sequence, read N- to C-terminus: Phenylalanine--tRNA ligase alpha subunit (327 aa).

Residue glutamate 252 coordinates Mg(2+).

This sequence belongs to the class-II aminoacyl-tRNA synthetase family. Phe-tRNA synthetase alpha subunit type 1 subfamily. Tetramer of two alpha and two beta subunits. Mg(2+) serves as cofactor.

The protein resides in the cytoplasm. It carries out the reaction tRNA(Phe) + L-phenylalanine + ATP = L-phenylalanyl-tRNA(Phe) + AMP + diphosphate + H(+). The sequence is that of Phenylalanine--tRNA ligase alpha subunit from Edwardsiella ictaluri (strain 93-146).